We begin with the raw amino-acid sequence, 305 residues long: 4-diphosphocytidyl-2-C-methyl-D-erythritol kinase (305 aa).

Residue Lys15 is part of the active site. 99–109 is an ATP binding site; sequence PMGGGIGGGSS. Asp141 is a catalytic residue.

The protein belongs to the GHMP kinase family. IspE subfamily.

It carries out the reaction 4-CDP-2-C-methyl-D-erythritol + ATP = 4-CDP-2-C-methyl-D-erythritol 2-phosphate + ADP + H(+). The protein operates within isoprenoid biosynthesis; isopentenyl diphosphate biosynthesis via DXP pathway; isopentenyl diphosphate from 1-deoxy-D-xylulose 5-phosphate: step 3/6. In terms of biological role, catalyzes the phosphorylation of the position 2 hydroxy group of 4-diphosphocytidyl-2C-methyl-D-erythritol. The polypeptide is 4-diphosphocytidyl-2-C-methyl-D-erythritol kinase (Marinomonas sp. (strain MWYL1)).